Here is a 1394-residue protein sequence, read N- to C-terminus: Ninein-like protein (1394 aa).

EF-hand domains follow at residues 8–43 (HYVS…LGLE) and 42–77 (LEEQ…VLSS). Disordered regions lie at residues 77–99 (SGSG…SCAV) and 126–166 (KYGS…KEPQ). A Phosphoserine modification is found at Ser-149. Residues 151–166 (ESLKSDEDAESAKEPQ) show a composition bias toward basic and acidic residues. EF-hand domains follow at residues 197–232 (TPEN…IGLH) and 234–269 (LEKQ…HEPP). Asp-247, Asp-249, Asp-251, Arg-253, and Glu-258 together coordinate Ca(2+). Coiled coils occupy residues 382 to 423 (RQEL…MDDC), 461 to 515 (WEQA…DSEK), and 544 to 584 (EQFT…SRQS). The KEN box signature appears at 494–496 (KEN). Residues 578-602 (LPRSRQSPAGTPGTHRRRIPGRGPA) form a disordered region. The short motif at 632–640 (RMQLETKVN) is the D-box element. Residues 835–863 (EKEKLEQTYREQVEGLVQEADVLRALLKN) are a coiled coil. The span at 866-893 (TVVSDQQERTPSSMSLGPDSRQQPTARQ) shows a compositional bias: polar residues. Positions 866-977 (TVVSDQQERT…SARTLTGQGQ (112 aa)) are disordered. Residues 939–951 (RSSENLGVRDNHQ) show a composition bias toward basic and acidic residues. Coiled coils occupy residues 1057–1229 (SESE…ELTE) and 1269–1331 (GARV…LRKQ).

As to quaternary structure, interacts with gamma-tubulin and TUBGCP4. Interacts with anaphase promoting complex/cyclosome (APC/C). Interacts with CDC20 and FZR1. Interacts with LCA5 and USH2A. Phosphorylated by PLK1 which disrupts its centrosome association and interaction with gamma-tubulin. In terms of processing, ubiquitinated by the APC/C complex leading to its degradation.

It is found in the cytoplasm. The protein localises to the cytoskeleton. It localises to the microtubule organizing center. Its subcellular location is the centrosome. Involved in the microtubule organization in interphase cells. Overexpression induces the fragmentation of the Golgi, and causes lysosomes to disperse toward the cell periphery; it also interferes with mitotic spindle assembly. Involved in vesicle transport in photoreceptor cells. The protein is Ninein-like protein (Ninl) of Mus musculus (Mouse).